The sequence spans 873 residues: Ectonucleotide pyrophosphatase/phosphodiesterase family member 3 (873 aa).

Residues 1–11 (MESMLTLAMEQ) lie on the Cytoplasmic side of the membrane. Residues 12-30 (PVKRNTLKKYKIACIVLLA) traverse the membrane as a helical; Signal-anchor for type II membrane protein segment. At 31 to 873 (LLVIVSLGLG…TYLPTFETTI (843 aa)) the chain is on the extracellular side. SMB domains are found at residues 51–93 (QGSC…VEST) and 94–138 (RIWM…GETS). Disulfide bonds link Cys54-Cys71, Cys58-Cys89, Cys69-Cys82, Cys75-Cys81, Cys98-Cys115, Cys103-Cys133, Cys113-Cys126, Cys119-Cys125, Cys144-Cys190, and Cys152-Cys364. The Cell attachment site signature appears at 78–80 (RGD). Residues 160–544 (PVILFSMDGF…HGSLNHLLKV (385 aa)) are phosphodiesterase. Asp167 provides a ligand contact to Zn(2+). Lys204 serves as a coordination point for ATP. Thr205 is a Zn(2+) binding site. Thr205 functions as the Nucleophile in the catalytic mechanism. Residue Asn226 participates in ATP binding. A glycan (N-linked (GlcNAc...) asparagine) is linked at Asn236. ATP is bound at residue Glu275. N-linked (GlcNAc...) asparagine glycosylation is present at Asn279. An ATP-binding site is contributed by Tyr289. Asn290 is a glycosylation site (N-linked (GlcNAc...) asparagine). Positions 325, 329, 372, and 373 each coordinate Zn(2+). Disulfide bonds link Cys380–Cys477, Cys428–Cys816, Cys561–Cys621, Cys573–Cys677, Cys575–Cys662, and Cys785–Cys795. A glycan (N-linked (GlcNAc...) asparagine) is linked at Asn425. His482 provides a ligand contact to Zn(2+). Residues Asn532, Asn592, Asn685, and Asn697 are each glycosylated (N-linked (GlcNAc...) asparagine). Residues 580–873 (NSIQLEQVNQ…TYLPTFETTI (294 aa)) are nuclease. Residues Asp750, Asn752, Asp754, His756, and Asp758 each coordinate Ca(2+). Residue Asn787 is glycosylated (N-linked (GlcNAc...) asparagine).

Monomer and homodimer. Zn(2+) serves as cofactor. N-glycosylated. N-glycosylation is necessary for normal transport to the cell membrane, but is not the apical targeting signal.

It localises to the cell membrane. Its subcellular location is the apical cell membrane. The protein localises to the secreted. It catalyses the reaction a ribonucleoside 5'-triphosphate + H2O = a ribonucleoside 5'-phosphate + diphosphate + H(+). The enzyme catalyses ATP + H2O = AMP + diphosphate + H(+). It carries out the reaction CTP + H2O = CMP + diphosphate + H(+). The catalysed reaction is GTP + H2O = GMP + diphosphate + H(+). It catalyses the reaction UTP + H2O = UMP + diphosphate + H(+). The enzyme catalyses UDP-N-acetyl-alpha-D-glucosamine + H2O = N-acetyl-alpha-D-glucosamine 1-phosphate + UMP + 2 H(+). It carries out the reaction P(1),P(3)-bis(5'-adenosyl) triphosphate + H2O = AMP + ADP + 2 H(+). The catalysed reaction is P(1),P(4)-bis(5'-adenosyl) tetraphosphate + H2O = AMP + ATP + 2 H(+). It catalyses the reaction P(1),P(5)-bis(5'-adenosyl) pentaphosphate + H2O = adenosine 5'-tetraphosphate + AMP + 2 H(+). The enzyme catalyses P(1),P(4)-bis(5'-guanosyl) tetraphosphate + H2O = GMP + GTP + 2 H(+). It carries out the reaction Hydrolytically removes 5'-nucleotides successively from the 3'-hydroxy termini of 3'-hydroxy-terminated oligonucleotides.. In terms of biological role, hydrolase that metabolizes extracellular nucleotides, including ATP, GTP, UTP and CTP. Limits mast cells and basophils response during inflammation and during the chronic phases of allergic responses by eliminating extracellular ATP, a signaling molecule activating these cells in an autocrine manner. Metabolizes extracellular ATP in the lumen of the small intestine, and thereby prevents ATP-induced apoptosis of intestinal plasmacytoid dendritic cells. Has a broad specificity and can also hydrolyze UDP-GlcNAc into UMP and GlcNAc-1-phosphate and potentially several other intracellular nucleotide sugars, including UDP-GalNAc, CMP-NeuAc, GDP-Fuc, and UDP-GlcA. Thereby, could modulate glycan biosynthesis and protein glycosylation. Can hydrolyze extracellular dinucleoside polyphosphates, including the vasoactive adenosine polyphosphates as well. In addition, displays an alkaline phosphodiesterase activity in vitro. This chain is Ectonucleotide pyrophosphatase/phosphodiesterase family member 3, found in Pongo abelii (Sumatran orangutan).